The chain runs to 475 residues: UDP-glucosyltransferase 102 (475 aa).

UDP-alpha-D-glucose contacts are provided by residues Ser-278, 344–345 (WA), 362–370 (HCGWNSTLE), and 384–387 (YGEQ).

The protein belongs to the UDP-glycosyltransferase family.

Its pathway is secondary metabolite biosynthesis; terpenoid biosynthesis. Probable component of the triterpene saponins (e.g. ginsenosides) biosynthetic pathway. No detectable activity toward protopanaxatriol (PPT). The sequence is that of UDP-glucosyltransferase 102 (UGT102) from Panax ginseng (Korean ginseng).